The sequence spans 444 residues: Ribosome biogenesis protein WDR12 homolog (444 aa).

The interval 7–87 is ubiquitin-like (UBL) domain; that stretch reads VLVKFVTKLP…ESTLEVEYVP (81 aa). The segment at 91–123 is disordered; it reads PPQQKNSTPHDDWVSSVDGSRCAPASSSGGSPS. WD repeat units lie at residues 105 to 148, 150 to 191, and 203 to 242; these read SSVD…VASV, AHAG…EEDA, and GHEDGVEAVAASPSGRRFASCGWDGKLLVWEGGEQLRWAA. The disordered stretch occupies residues 243-264; the sequence is GTAEASKKKRKTGTANGSAAAG. WD repeat units lie at residues 272-310, 312-352, 360-400, and 403-444; these read GHLHCVSSVAWPAENSLFSGGWDHSVRRWDVSSGAAADT, NGSK…GSDA, AHGG…PLGM, and HHTD…YIVS.

This sequence belongs to the WD repeat WDR12/YTM1 family.

Its subcellular location is the nucleus. It localises to the nucleolus. The protein localises to the nucleoplasm. In terms of biological role, required for maturation of ribosomal RNAs and formation of the large ribosomal subunit. The chain is Ribosome biogenesis protein WDR12 homolog from Chlamydomonas reinhardtii (Chlamydomonas smithii).